Reading from the N-terminus, the 71-residue chain is Cytotoxic linear peptide IsCT2 (71 aa).

Residues 1-23 (MKTQFAILLVALVLFQMFAQSEA) form the signal peptide. Phe36 carries the post-translational modification Phenylalanine amide. Positions 40 to 71 (ALNNDLDLDGLDELFDGEISQADVDFLKELMR) are excised as a propeptide.

The protein belongs to the non-disulfide-bridged peptide (NDBP) superfamily. Short antimicrobial peptide (group 4) family. IsCT2F is an enzymatic proteolytic cleavage product of IsCT2 by the proteases present in the venom. In terms of tissue distribution, expressed by the venom gland.

Its subcellular location is the secreted. It localises to the target cell membrane. Functionally, isCT2 shows weak hemolytic activity and antibacterial activity against both Gram-positive and Gram-negative bacteria probably by forming pores in the cell membrane. IsCT2 adopts an amphipathic alpha-helical structure. IsCT2f shows neither hemolytic, nor antibacterial activities, surely due to the fact that it cannot apply amphipathic alpha-helical structure. This chain is Cytotoxic linear peptide IsCT2, found in Opisthacanthus madagascariensis (Scorpion).